The primary structure comprises 367 residues: Probable outer membrane usher protein LpfC (367 aa).

Residues 1-30 (MSRKTVSRTFSSFSISVVAVAVASTFSAHA) form the signal peptide.

Belongs to the fimbrial export usher family.

It localises to the cell outer membrane. Part of the lpfABCC'DE fimbrial operon. LP fimbriae may participate in the interaction with eukaryotic cells by assisting in microcolony formation. Could be involved in the export and assembly of the fimbrial subunits across the outer membrane. The polypeptide is Probable outer membrane usher protein LpfC (lpfC) (Escherichia coli O157:H7).